A 968-amino-acid polypeptide reads, in one-letter code: MKHLTASEVRSTFINFFREKKEHTYVHSSSVIPHDDPTLLFANAGMNQFKPLFLGIADPNSDLAKLKRAVNTQKCIRAGGKHNDLDDVGKDVYHHTYFEMLGNWSFGDYFKKEIITWAWELLTTVYGIPAERLYVSVFGGDEANGVPADSEARDIWRSVGVPDERILNFGMKDNFWEMGDVGPCGPCSEIHYDRIGNRDASHLVNADDPMVVEIWNLVFIQFNREEGGVLKPLPAKHIDCGLGLERLIAVMQDKTSNYDTDIFQPIFEAIHKGSGVRAYTGFIGDEDKDGVDMAYRVVADHVRTLTIALSDGGRPDNSGRGYVLRRILRRGVRYASEKLNAQPGFFASLVPVVISILGETFPELSRDPVTVMDIINDEEKQFLKTLSRGRVLFQRAVQSLPEGTMTFPGDVSWRLYDTYGFPADLTQLMAEEKGLSVDNTAFEEARRKAIETSSAGTGKFRDTLDLDVHALAELQQKGVPTTDDSPKYAYTFTGEGSDAVYKFEPCVGKILAIRRDGKFVDQLAAGEEGAILLDRTNFYAEQGGQIYDVGVLTKVNDESNEFNVSNCQVRGGYIVLVGSAEGSFSVGDQVNERFDEDRKQLIMKNHTGTHVLNYALRKVLADSDQKGSLVAPDRMRFDFTNKAGMTVQQVKKAEEYAQQLIDTKGQVYAKNSPLGEAKKVKGLRAMFDETYPDPVRVVAVGTPVEQLLQNPDAEEGQNTTVEFCGGTHLQNVSHIGRIVIASEEAIAKGIRRIVALTGPEAERAIARADRLTARLEEESKHADKKDELLANKDKFKALQKKIQEIVDEANGAQLPYWRKDSIREKAKAIQKTLDGYTKAQQAAVAEKVLGEAKELAAVAEQPTVLVHVFAANANSKAIDNALKLLKDTKAVMAFSVNEDSGKVLCLAKVDKSLVSNGLKANEWVNEVCTVLGGKGGGKDANAQLTGENVDKLDAAVELAQKFALAAIN.

ATP-binding positions include arginine 77, histidine 95, tryptophan 176, and 214–216 (IWN). Asparagine 216 and aspartate 239 together coordinate L-alanine. Glycine 243 lines the ATP pocket. Histidine 606, histidine 610, cysteine 724, and histidine 728 together coordinate Zn(2+).

It belongs to the class-II aminoacyl-tRNA synthetase family. Monomer. Requires Zn(2+) as cofactor.

It is found in the cytoplasm. It carries out the reaction tRNA(Ala) + L-alanine + ATP = L-alanyl-tRNA(Ala) + AMP + diphosphate. Catalyzes the attachment of alanine to tRNA(Ala) in a two-step reaction: alanine is first activated by ATP to form Ala-AMP and then transferred to the acceptor end of tRNA(Ala). Also edits incorrectly charged tRNA(Ala) via its editing domain. This chain is Alanine--tRNA ligase, cytoplasmic, found in Caenorhabditis elegans.